A 319-amino-acid chain; its full sequence is MIFYTLEHILTHISFSLVSIGITIFLITLSVDEIIGLYDSSEKGVIGTFLCITGLLVTRWAYSGHFPLSNLYESLLFLSWSFAIIHMFPYFKKQNSYVRTITSSSTIFTQGLVTSGLLSEMQQSEILVPALQSQWLMMHVSMMVLGYAALLCGSLLSVALLVITFRKALRIFSKKKAFLKDSFSFVEIQYRNEPSNVLLSTSFISSKNYYRAQLIQQLDRWSSRIISLGFIFLTIGILSGAVWANEAWGSYWNWDPKETWAFITWTMFAIYLHTRTNPNFQSVNSAIVAFLGFIIIWICYFGVNLLGIGLHSYGSFNLH.

Transmembrane regions (helical) follow at residues 9–29 (ILTHISFSLVSIGITIFLITL), 44–64 (GVIGTFLCITGLLVTRWAYSG), 71–91 (LYESLLFLSWSFAIIHMFPYF), 143–163 (MVLGYAALLCGSLLSVALLVI), 225–245 (IISLGFIFLTIGILSGAVWAN), 259–273 (TWAFITWTMFAIYLH), and 286–306 (AIVAFLGFIIIWICYFGVNLL).

It belongs to the CcmF/CycK/Ccl1/NrfE/CcsA family. As to quaternary structure, may interact with Ccs1.

It localises to the plastid. Its subcellular location is the chloroplast thylakoid membrane. Functionally, required during biogenesis of c-type cytochromes (cytochrome c6 and cytochrome f) at the step of heme attachment. The chain is Cytochrome c biogenesis protein CcsA from Oenothera glazioviana (Large-flowered evening primrose).